A 327-amino-acid polypeptide reads, in one-letter code: Phenylalanine--tRNA ligase alpha subunit (327 aa).

Position 252 (Glu-252) interacts with Mg(2+).

The protein belongs to the class-II aminoacyl-tRNA synthetase family. Phe-tRNA synthetase alpha subunit type 1 subfamily. In terms of assembly, tetramer of two alpha and two beta subunits. Mg(2+) serves as cofactor.

The protein resides in the cytoplasm. The enzyme catalyses tRNA(Phe) + L-phenylalanine + ATP = L-phenylalanyl-tRNA(Phe) + AMP + diphosphate + H(+). The protein is Phenylalanine--tRNA ligase alpha subunit of Shewanella putrefaciens (strain CN-32 / ATCC BAA-453).